A 274-amino-acid chain; its full sequence is Outer surface protein A (274 aa).

An N-terminal signal peptide occupies residues 1–16 (MKKYLLGIGLILALIA). Cysteine 17 is lipidated: N-palmitoyl cysteine. A lipid anchor (S-diacylglycerol cysteine) is attached at cysteine 17.

This sequence belongs to the OspA lipoprotein family.

It is found in the cell outer membrane. Its subcellular location is the cell surface. The chain is Outer surface protein A from Borreliella burgdorferi (Lyme disease spirochete).